The following is a 143-amino-acid chain: Large ribosomal subunit protein uL13 (143 aa).

The protein belongs to the universal ribosomal protein uL13 family. In terms of assembly, part of the 50S ribosomal subunit.

Its function is as follows. This protein is one of the early assembly proteins of the 50S ribosomal subunit, although it is not seen to bind rRNA by itself. It is important during the early stages of 50S assembly. The polypeptide is Large ribosomal subunit protein uL13 (Prochlorococcus marinus subsp. pastoris (strain CCMP1986 / NIES-2087 / MED4)).